We begin with the raw amino-acid sequence, 316 residues long: Biotin synthase (316 aa).

Positions 39–263 (NAIQCSTLLS…LFPKAYVRLS (225 aa)) constitute a Radical SAM core domain. [4Fe-4S] cluster contacts are provided by cysteine 54, cysteine 58, and cysteine 61. Residues cysteine 98, cysteine 129, cysteine 189, and arginine 261 each coordinate [2Fe-2S] cluster.

The protein belongs to the radical SAM superfamily. Biotin synthase family. Homodimer. It depends on [4Fe-4S] cluster as a cofactor. [2Fe-2S] cluster serves as cofactor.

The enzyme catalyses (4R,5S)-dethiobiotin + (sulfur carrier)-SH + 2 reduced [2Fe-2S]-[ferredoxin] + 2 S-adenosyl-L-methionine = (sulfur carrier)-H + biotin + 2 5'-deoxyadenosine + 2 L-methionine + 2 oxidized [2Fe-2S]-[ferredoxin]. Its pathway is cofactor biosynthesis; biotin biosynthesis; biotin from 7,8-diaminononanoate: step 2/2. Its function is as follows. Catalyzes the conversion of dethiobiotin (DTB) to biotin by the insertion of a sulfur atom into dethiobiotin via a radical-based mechanism. In Acidithiobacillus ferrooxidans (strain ATCC 23270 / DSM 14882 / CIP 104768 / NCIMB 8455) (Ferrobacillus ferrooxidans (strain ATCC 23270)), this protein is Biotin synthase.